The chain runs to 286 residues: Phosphoribosylaminoimidazole-succinocarboxamide synthase (286 aa).

The protein belongs to the SAICAR synthetase family.

It carries out the reaction 5-amino-1-(5-phospho-D-ribosyl)imidazole-4-carboxylate + L-aspartate + ATP = (2S)-2-[5-amino-1-(5-phospho-beta-D-ribosyl)imidazole-4-carboxamido]succinate + ADP + phosphate + 2 H(+). It participates in purine metabolism; IMP biosynthesis via de novo pathway; 5-amino-1-(5-phospho-D-ribosyl)imidazole-4-carboxamide from 5-amino-1-(5-phospho-D-ribosyl)imidazole-4-carboxylate: step 1/2. The chain is Phosphoribosylaminoimidazole-succinocarboxamide synthase from Histophilus somni (strain 2336) (Haemophilus somnus).